The sequence spans 248 residues: Ubiquinone biosynthesis O-methyltransferase (248 aa).

S-adenosyl-L-methionine-binding residues include arginine 41, glycine 72, aspartate 93, and methionine 136.

It belongs to the methyltransferase superfamily. UbiG/COQ3 family.

It catalyses the reaction a 3-demethylubiquinol + S-adenosyl-L-methionine = a ubiquinol + S-adenosyl-L-homocysteine + H(+). It carries out the reaction a 3-(all-trans-polyprenyl)benzene-1,2-diol + S-adenosyl-L-methionine = a 2-methoxy-6-(all-trans-polyprenyl)phenol + S-adenosyl-L-homocysteine + H(+). The protein operates within cofactor biosynthesis; ubiquinone biosynthesis. Its function is as follows. O-methyltransferase that catalyzes the 2 O-methylation steps in the ubiquinone biosynthetic pathway. The chain is Ubiquinone biosynthesis O-methyltransferase from Rhizobium etli (strain ATCC 51251 / DSM 11541 / JCM 21823 / NBRC 15573 / CFN 42).